We begin with the raw amino-acid sequence, 338 residues long: Mycothiol acetyltransferase (338 aa).

2 consecutive N-acetyltransferase domains span residues 29-173 and 181-338; these read PETY…HQLP and ISLR…NKFQ. A 1D-myo-inositol 2-(L-cysteinylamino)-2-deoxy-alpha-D-glucopyranoside-binding site is contributed by Asp55. Residue 105 to 107 participates in acetyl-CoA binding; the sequence is LVV. Residues Glu208, Lys248, and Glu261 each contribute to the 1D-myo-inositol 2-(L-cysteinylamino)-2-deoxy-alpha-D-glucopyranoside site. Acetyl-CoA contacts are provided by residues 265–267 and 272–278; these read VGI and QGKGLGK. Tyr299 provides a ligand contact to 1D-myo-inositol 2-(L-cysteinylamino)-2-deoxy-alpha-D-glucopyranoside.

The protein belongs to the acetyltransferase family. MshD subfamily. Monomer.

It catalyses the reaction 1D-myo-inositol 2-(L-cysteinylamino)-2-deoxy-alpha-D-glucopyranoside + acetyl-CoA = mycothiol + CoA + H(+). Catalyzes the transfer of acetyl from acetyl-CoA to desacetylmycothiol (Cys-GlcN-Ins) to form mycothiol. The sequence is that of Mycothiol acetyltransferase from Renibacterium salmoninarum (strain ATCC 33209 / DSM 20767 / JCM 11484 / NBRC 15589 / NCIMB 2235).